The primary structure comprises 58 residues: Sodium/potassium-transporting ATPase subunit gamma (58 aa).

The chain crosses the membrane as a helical span at residues 20–39 (NGGLIFAALAFIVGLVIILS).

The protein belongs to the FXYD family. As to quaternary structure, regulatory subunit of the sodium/potassium-transporting ATPase which is composed of a catalytic alpha subunit, an auxiliary non-catalytic beta subunit and an additional regulatory subunit. In terms of tissue distribution, highest levels expressed in the kidney and spleen. Restricted to the basolateral membrane in renal epithelial cells and varies in its level of expression along the nephron.

Its subcellular location is the membrane. Functionally, may be involved in forming the receptor site for cardiac glycoside binding or may modulate the transport function of the sodium ATPase. The chain is Sodium/potassium-transporting ATPase subunit gamma (FXYD2) from Bos taurus (Bovine).